Here is a 66-residue protein sequence, read N- to C-terminus: Putative alpha-neurotoxin RjAa16 (66 aa).

The region spanning 1-60 is the LCN-type CS-alpha/beta domain; that stretch reads KEGYPVDWGNCKYECMSDAYCKDLCVDRKAKSGYCYKLNWFCYCEGLPDDSPIKTNGHCR. Cystine bridges form between cysteine 11-cysteine 59, cysteine 15-cysteine 35, cysteine 21-cysteine 42, and cysteine 25-cysteine 44.

It belongs to the long (4 C-C) scorpion toxin superfamily. Sodium channel inhibitor family. Alpha subfamily. Expressed by the venom gland.

The protein localises to the secreted. Alpha toxins bind voltage-independently at site-3 of sodium channels (Nav) and inhibits the inactivation of the activated channels, thereby blocking neuronal transmission. This Rhopalurus junceus (Caribbean blue scorpion) protein is Putative alpha-neurotoxin RjAa16.